Reading from the N-terminus, the 104-residue chain is Thioredoxin (104 aa).

Residues 2–104 (AIVKVTDSNF…NLAEVIEKHL (103 aa)) enclose the Thioredoxin domain. The cysteines at positions 29 and 32 are disulfide-linked.

It belongs to the thioredoxin family.

In terms of biological role, component of the thioredoxin-thioredoxin reductase system. Participates in various redox reactions through the reversible oxidation of its active center dithiol to a disulfide and catalyzes dithiol-disulfide exchange reactions. This Staphylococcus saprophyticus subsp. saprophyticus (strain ATCC 15305 / DSM 20229 / NCIMB 8711 / NCTC 7292 / S-41) protein is Thioredoxin (trxA).